The sequence spans 282 residues: Pantothenate synthetase (282 aa).

Residue 30 to 37 (MGYLHEGH) participates in ATP binding. The Proton donor role is filled by His-37. Gln-61 serves as a coordination point for (R)-pantoate. Gln-61 lines the beta-alanine pocket. 148-151 (GQKD) provides a ligand contact to ATP. Gln-154 provides a ligand contact to (R)-pantoate. ATP contacts are provided by residues Val-177 and 185 to 188 (MSSR).

It belongs to the pantothenate synthetase family. As to quaternary structure, homodimer.

The protein resides in the cytoplasm. It carries out the reaction (R)-pantoate + beta-alanine + ATP = (R)-pantothenate + AMP + diphosphate + H(+). Its pathway is cofactor biosynthesis; (R)-pantothenate biosynthesis; (R)-pantothenate from (R)-pantoate and beta-alanine: step 1/1. Its function is as follows. Catalyzes the condensation of pantoate with beta-alanine in an ATP-dependent reaction via a pantoyl-adenylate intermediate. This Syntrophomonas wolfei subsp. wolfei (strain DSM 2245B / Goettingen) protein is Pantothenate synthetase.